A 64-amino-acid polypeptide reads, in one-letter code: Large ribosomal subunit protein uL30 (64 aa).

It belongs to the universal ribosomal protein uL30 family. Part of the 50S ribosomal subunit.

The chain is Large ribosomal subunit protein uL30 from Rhodopseudomonas palustris (strain HaA2).